The primary structure comprises 380 residues: Crotonobetainyl-CoA reductase (380 aa).

Belongs to the acyl-CoA dehydrogenase family. In terms of assembly, homotetramer. FAD serves as cofactor.

The protein resides in the cytoplasm. The enzyme catalyses 4-(trimethylamino)butanoyl-CoA + oxidized [electron-transfer flavoprotein] + H(+) = crotonobetainyl-CoA + reduced [electron-transfer flavoprotein]. The protein operates within amine and polyamine metabolism; carnitine metabolism. Catalyzes the reduction of crotonobetainyl-CoA to gamma-butyrobetainyl-CoA. This chain is Crotonobetainyl-CoA reductase, found in Salmonella typhi.